We begin with the raw amino-acid sequence, 395 residues long: Dihydrolipoyllysine-residue succinyltransferase component of 2-oxoglutarate dehydrogenase complex (395 aa).

The region spanning 2–77 is the Lipoyl-binding domain; it reads RVKIIVPSLG…AVGEEIGEIN (76 aa). Lys-43 is subject to N6-lipoyllysine. In terms of domain architecture, Peripheral subunit-binding (PSBD) spans 111–148; the sequence is TLAPSVQKLVTENKLDPNNIKGTGRDGRITKGDVLATI. Catalysis depends on residues His-366 and Asp-370.

This sequence belongs to the 2-oxoacid dehydrogenase family. In terms of assembly, forms a 24-polypeptide structural core with octahedral symmetry. Part of the 2-oxoglutarate dehydrogenase (OGDH) complex composed of E1 (2-oxoglutarate dehydrogenase), E2 (dihydrolipoamide succinyltransferase) and E3 (dihydrolipoamide dehydrogenase); the complex contains multiple copies of the three enzymatic components (E1, E2 and E3). The cofactor is (R)-lipoate.

It catalyses the reaction N(6)-[(R)-dihydrolipoyl]-L-lysyl-[protein] + succinyl-CoA = N(6)-[(R)-S(8)-succinyldihydrolipoyl]-L-lysyl-[protein] + CoA. It functions in the pathway amino-acid degradation; L-lysine degradation via saccharopine pathway; glutaryl-CoA from L-lysine: step 6/6. E2 component of the 2-oxoglutarate dehydrogenase (OGDH) complex which catalyzes the second step in the conversion of 2-oxoglutarate to succinyl-CoA and CO(2). This chain is Dihydrolipoyllysine-residue succinyltransferase component of 2-oxoglutarate dehydrogenase complex (sucB), found in Rickettsia conorii (strain ATCC VR-613 / Malish 7).